Here is a 144-residue protein sequence, read N- to C-terminus: uncharacterized protein (144 aa).

In terms of domain architecture, N-acetyltransferase spans 2 to 144; sequence IELDAINPNN…EDSVLLSKKL (143 aa).

This sequence belongs to the acetyltransferase family.

The protein resides in the cytoplasm. The protein localises to the nucleus. This is an uncharacterized protein from Schizosaccharomyces pombe (strain 972 / ATCC 24843) (Fission yeast).